The primary structure comprises 856 residues: Genome polyprotein (856 aa).

The Peptidase S30 domain maps to 141–284; that stretch reads KLTESQMNHL…QGVLNSMVQF (144 aa). Catalysis depends on for P1 proteinase activity residues histidine 192, aspartate 201, and serine 235. Positions 592-594 match the Involved in virions binding and aphid transmission motif; it reads PTK. In terms of domain architecture, Peptidase C6 spans 618–740; that stretch reads LYIAKQGYCY…ESEIKHYRVG (123 aa). Catalysis depends on for helper component proteinase activity residues cysteine 626 and histidine 699.

This sequence belongs to the potyviridae genome polyprotein family. Post-translationally, genome polyprotein of potyviruses undergoes post-translational proteolytic processing by the main proteinase NIa-pro resulting in the production of at least ten individual proteins. The P1 proteinase and the HC-pro cleave only their respective C-termini autocatalytically. 6K1 is essential for proper proteolytic separation of P3 from CI.

The enzyme catalyses Hydrolyzes a Gly-|-Gly bond at its own C-terminus, commonly in the sequence -Tyr-Xaa-Val-Gly-|-Gly, in the processing of the potyviral polyprotein.. Its function is as follows. Required for aphid transmission and also has proteolytic activity. Only cleaves a Gly-Gly dipeptide at its own C-terminus. Interacts with virions and aphid stylets. Acts as a suppressor of RNA-mediated gene silencing, also known as post-transcriptional gene silencing (PTGS), a mechanism of plant viral defense that limits the accumulation of viral RNAs. May have RNA-binding activity. This chain is Genome polyprotein, found in Potato virus Y (strain C) (PVY).